The sequence spans 375 residues: Histidine biosynthesis bifunctional protein HisB (375 aa).

The interval 1 to 168 is histidinol-phosphatase; that stretch reads MTPILFVDRD…GIAHELADAP (168 aa). Residue D8 is the Nucleophile of the active site. Mg(2+) is bound by residues D8, D10, and D128. The Proton donor role is filled by D10. The tract at residues 169–375 is imidazoleglycerol-phosphate dehydratase; it reads RRAVVQRNTK…TALPTTKGAL (207 aa).

It in the N-terminal section; belongs to the histidinol-phosphatase family. The protein in the C-terminal section; belongs to the imidazoleglycerol-phosphate dehydratase family. Mg(2+) serves as cofactor.

Its subcellular location is the cytoplasm. It catalyses the reaction D-erythro-1-(imidazol-4-yl)glycerol 3-phosphate = 3-(imidazol-4-yl)-2-oxopropyl phosphate + H2O. It carries out the reaction L-histidinol phosphate + H2O = L-histidinol + phosphate. It functions in the pathway amino-acid biosynthesis; L-histidine biosynthesis; L-histidine from 5-phospho-alpha-D-ribose 1-diphosphate: step 6/9. The protein operates within amino-acid biosynthesis; L-histidine biosynthesis; L-histidine from 5-phospho-alpha-D-ribose 1-diphosphate: step 8/9. The polypeptide is Histidine biosynthesis bifunctional protein HisB (Xanthomonas euvesicatoria pv. vesicatoria (strain 85-10) (Xanthomonas campestris pv. vesicatoria)).